A 463-amino-acid chain; its full sequence is tRNA-splicing endonuclease subunit Sen2 (463 aa).

Phosphoserine occurs at positions 32 and 147. Positions 120–213 (HDESTVQKIL…VASPSSLNGH (94 aa)) are disordered. Basic and acidic residues-rich tracts occupy residues 139–149 (PYRERKGESPQ) and 159–170 (SSLEGREGKDEL). Residues Tyr-367 and His-375 contribute to the active site. Ser-406, Ser-409, and Ser-413 each carry phosphoserine. Lys-414 is an active-site residue.

The protein belongs to the tRNA-intron endonuclease family. As to quaternary structure, tRNA splicing endonuclease is a heterotetramer composed of TSEN2, TSEN15, TSEN34/LENG5 and TSEN54. tRNA splicing endonuclease complex also contains proteins of the pre-mRNA 3'-end processing machinery such as CLP1, CPSF1, CPSF4 and CSTF2.

It is found in the nucleus. It localises to the nucleolus. It carries out the reaction pretRNA = a 3'-half-tRNA molecule with a 5'-OH end + a 5'-half-tRNA molecule with a 2',3'-cyclic phosphate end + an intron with a 2',3'-cyclic phosphate and a 5'-hydroxyl terminus.. Its function is as follows. Constitutes one of the two catalytic subunit of the tRNA-splicing endonuclease complex, a complex responsible for identification and cleavage of the splice sites in pre-tRNA. It cleaves pre-tRNA at the 5'- and 3'-splice sites to release the intron. The products are an intron and two tRNA half-molecules bearing 2',3'-cyclic phosphate and 5'-OH termini. There are no conserved sequences at the splice sites, but the intron is invariably located at the same site in the gene, placing the splice sites an invariant distance from the constant structural features of the tRNA body. Probably carries the active site for 5'-splice site cleavage. The tRNA splicing endonuclease is also involved in mRNA processing via its association with pre-mRNA 3'-end processing factors, establishing a link between pre-tRNA splicing and pre-mRNA 3'-end formation, suggesting that the endonuclease subunits function in multiple RNA-processing events. The polypeptide is tRNA-splicing endonuclease subunit Sen2 (Tsen2) (Rattus norvegicus (Rat)).